We begin with the raw amino-acid sequence, 23 residues long: Caerulein precursor fragment BM2 (23 aa).

Expressed by the skin glands.

It localises to the secreted. Functionally, antimicrobial peptide. The polypeptide is Caerulein precursor fragment BM2 (Xenopus boumbaensis (Mawa clawed frog)).